We begin with the raw amino-acid sequence, 427 residues long: cAMP-dependent protein kinase regulatory subunit (427 aa).

A dimerization and phosphorylation region spans residues 38 to 184 (QFCSNFFIRK…RIKVSISNNF (147 aa)). Residues 96–145 (TTHMGHPNDHGALHDDDDDPLEDEDDEEFDKFSTEPLPSLPPTNYNRGRR) are disordered. The span at 110-124 (DDDDDPLEDEDDEEF) shows a compositional bias: acidic residues. Phosphoserine is present on serine 147. 3',5'-cyclic AMP is bound by residues 185–300 (LFRN…FLSE), glutamate 250, arginine 259, 303–422 (LLKS…YHAV), glutamate 372, and arginine 381.

Belongs to the cAMP-dependent kinase regulatory chain family. Tetramer, composed of 2 regulatory (R) and 2 catalytic (C) subunits. In the presence of cAMP it dissociates into 2 active monomeric C subunits and an R dimer.

This is cAMP-dependent protein kinase regulatory subunit (pkar) from Mucor circinelloides f. lusitanicus (Mucor racemosus var. lusitanicus).